The following is a 494-amino-acid chain: UPF0371 protein SPT_0390 (494 aa).

This sequence belongs to the UPF0371 family.

The protein is UPF0371 protein SPT_0390 of Streptococcus pneumoniae (strain Taiwan19F-14).